A 355-amino-acid chain; its full sequence is Butyrate kinase 1 (355 aa).

The protein belongs to the acetokinase family.

The protein localises to the cytoplasm. It carries out the reaction butanoate + ATP = butanoyl phosphate + ADP. It participates in lipid metabolism; butanoate metabolism. Its function is as follows. Catalyzes the conversion of butyryl-CoA through butyryl phosphate to butyrate. The protein is Butyrate kinase 1 (buk1) of Clostridium acetobutylicum (strain ATCC 824 / DSM 792 / JCM 1419 / IAM 19013 / LMG 5710 / NBRC 13948 / NRRL B-527 / VKM B-1787 / 2291 / W).